The primary structure comprises 480 residues: Glutamate--tRNA ligase (480 aa).

The 'HIGH' region signature appears at 9 to 19 (PSPTGDPHVGT). The 'KMSKS' region signature appears at 253 to 257 (KISKR). Lysine 256 contributes to the ATP binding site.

Belongs to the class-I aminoacyl-tRNA synthetase family. Glutamate--tRNA ligase type 1 subfamily. As to quaternary structure, monomer.

It is found in the cytoplasm. The catalysed reaction is tRNA(Glu) + L-glutamate + ATP = L-glutamyl-tRNA(Glu) + AMP + diphosphate. Catalyzes the attachment of glutamate to tRNA(Glu) in a two-step reaction: glutamate is first activated by ATP to form Glu-AMP and then transferred to the acceptor end of tRNA(Glu). The polypeptide is Glutamate--tRNA ligase (Deinococcus geothermalis (strain DSM 11300 / CIP 105573 / AG-3a)).